A 122-amino-acid chain; its full sequence is Large ribosomal subunit protein uL14 (122 aa).

Belongs to the universal ribosomal protein uL14 family. In terms of assembly, part of the 50S ribosomal subunit. Forms a cluster with proteins L3 and L19. In the 70S ribosome, L14 and L19 interact and together make contacts with the 16S rRNA in bridges B5 and B8.

In terms of biological role, binds to 23S rRNA. Forms part of two intersubunit bridges in the 70S ribosome. In Chlorobium chlorochromatii (strain CaD3), this protein is Large ribosomal subunit protein uL14.